Consider the following 513-residue polypeptide: Arabinoxylan arabinofuranohydrolase (513 aa).

The N-terminal stretch at 1 to 26 is a signal peptide; sequence MRKKCSVCLWILVLLLSCLSGKSAYA. Asp-50 serves as the catalytic Proton acceptor. Glu-251 functions as the Proton donor in the catalytic mechanism. Asn-314 serves as a coordination point for substrate. Residues 382–511 form the CBM6 domain; that stretch reads NRVEAETFAW…LFNFDYWQFT (130 aa). Ca(2+)-binding residues include Glu-385, Glu-387, Asn-409, Gln-410, and Asp-506.

Its subcellular location is the secreted. It catalyses the reaction Hydrolysis of terminal non-reducing alpha-L-arabinofuranoside residues in alpha-L-arabinosides.. It functions in the pathway glycan degradation; xylan degradation. Functionally, cleaves arabinose units from O-2- or O-3-monosubstituted xylose residues, thereby assisting in arabinoxylan (AX) and short-chain arabinoxylo-oligosaccharide (AXOS) degradation. Is more active on wheat bran AXOS than on wheat water-extractable AX and rye water-extractable AX. Does not display endoxylanase, xylosidase or arabinanase activity. The chain is Arabinoxylan arabinofuranohydrolase (xynD) from Bacillus subtilis (strain 168).